The following is a 609-amino-acid chain: Glutamine--fructose-6-phosphate aminotransferase [isomerizing] (609 aa).

Residue Cys2 is the Nucleophile; for GATase activity of the active site. Residues 2–219 form the Glutamine amidotransferase type-2 domain; sequence CGIFGYLGNQ…SGEFAIVSQG (218 aa). SIS domains are found at residues 285–426 and 458–599; these read LSDV…VHGA and WAQP…IDCP. Residue Lys604 is the For Fru-6P isomerization activity of the active site.

In terms of assembly, homodimer.

Its subcellular location is the cytoplasm. It catalyses the reaction D-fructose 6-phosphate + L-glutamine = D-glucosamine 6-phosphate + L-glutamate. Its function is as follows. Catalyzes the first step in hexosamine metabolism, converting fructose-6P into glucosamine-6P using glutamine as a nitrogen source. The sequence is that of Glutamine--fructose-6-phosphate aminotransferase [isomerizing] from Chlamydia pneumoniae (Chlamydophila pneumoniae).